Here is a 339-residue protein sequence, read N- to C-terminus: Major pollen allergen Lol p 5b (339 aa).

The signal sequence occupies residues 1–25 (MAVQKHTVALFLAVALVAGPAASYA). 9 tandem repeats follow at residues 32–34 (PAT), 35–37 (PAT), 38–40 (PAA), 41–43 (PAT), 44–46 (AAT), 47–49 (PAT), 50–52 (PAT), 53–55 (PAT), and 56–58 (PAA). A 9 X 3 AA tandem repeats of [PA]-A-[TA] region spans residues 32-58 (PATPATPAAPATAATPATPATPATPAA). Low complexity predominate over residues 36–58 (ATPAAPATAATPATPATPATPAA). Residues 36-65 (ATPAAPATAATPATPATPATPAAVPSGKAT) are disordered. One copy of the 2-1; truncated repeat lies at 285–290 (ATPAAA). Residues 285 to 334 (ATPAAAATATPTPAAATATATPAAAYATATPAAATATATPAAATATPAAA) are 6 X 9 AA approximate tandem repeats of T-A-T-A-T-P-A-A-A. Repeat copies occupy residues 292–300 (TATPTPAAA), 301–309 (TATATPAAA), 310–318 (YATATPAAA), and 319–327 (TATATPAAA). The stretch at 328 to 334 (TATPAAA) is one 2-6; truncated repeat.

This sequence belongs to the Poa p IX/Phl p VI allergen family. As to expression, pollen, starch granules.

This Lolium perenne (Perennial ryegrass) protein is Major pollen allergen Lol p 5b.